The primary structure comprises 229 residues: Ras-related protein RabZ (229 aa).

Residues Met-1–Pro-39 are disordered. Gly-2 is lipidated: N-myristoyl glycine. The S-palmitoyl cysteine moiety is linked to residue Cys-3. Over residues Thr-15–Ser-32 the composition is skewed to basic and acidic residues. Gly-57–Ser-64 contacts GTP. An Effector region motif is present at residues His-79–Cys-88. GTP is bound by residues Asp-106–Gln-110 and Asn-164–Asp-167.

The protein belongs to the small GTPase superfamily. Rab family. In terms of processing, although this sequence lacks the C-terminal cysteine motifs subject to isoprenylation in other Rab proteins, it does have N-terminal myristoylation and S-palmitoylation sequence motifs.

The sequence is that of Ras-related protein RabZ (rabZ) from Dictyostelium discoideum (Social amoeba).